Reading from the N-terminus, the 361-residue chain is Phosphoserine aminotransferase (361 aa).

Arginine 43 serves as a coordination point for L-glutamate. Pyridoxal 5'-phosphate is bound by residues 77–78 (AS), tryptophan 103, threonine 153, aspartate 173, and glutamine 196. An N6-(pyridoxal phosphate)lysine modification is found at lysine 197. Residue 238 to 239 (NT) participates in pyridoxal 5'-phosphate binding.

This sequence belongs to the class-V pyridoxal-phosphate-dependent aminotransferase family. SerC subfamily. Homodimer. The cofactor is pyridoxal 5'-phosphate.

It is found in the cytoplasm. It carries out the reaction O-phospho-L-serine + 2-oxoglutarate = 3-phosphooxypyruvate + L-glutamate. It catalyses the reaction 4-(phosphooxy)-L-threonine + 2-oxoglutarate = (R)-3-hydroxy-2-oxo-4-phosphooxybutanoate + L-glutamate. The protein operates within amino-acid biosynthesis; L-serine biosynthesis; L-serine from 3-phospho-D-glycerate: step 2/3. Its pathway is cofactor biosynthesis; pyridoxine 5'-phosphate biosynthesis; pyridoxine 5'-phosphate from D-erythrose 4-phosphate: step 3/5. In terms of biological role, catalyzes the reversible conversion of 3-phosphohydroxypyruvate to phosphoserine and of 3-hydroxy-2-oxo-4-phosphonooxybutanoate to phosphohydroxythreonine. The chain is Phosphoserine aminotransferase from Pseudomonas entomophila (strain L48).